The sequence spans 93 residues: Protein LSO1 (93 aa).

Residues 1 to 73 are disordered; it reads MHNTGKRYSE…TEKLRAKKER (73 aa). The stretch at 20-83 forms a coiled coil; it reads ARKRRQAYEK…DQLLAAEEEA (64 aa). Composition is skewed to basic and acidic residues over residues 25 to 49 and 57 to 73; these read QAYE…EEGA and LIME…KKER.

Its subcellular location is the nucleus. It localises to the cytoplasm. Functionally, likely to play a role in iron homeostasis. The protein is Protein LSO1 of Saccharomyces cerevisiae (strain ATCC 204508 / S288c) (Baker's yeast).